Reading from the N-terminus, the 122-residue chain is Large ribosomal subunit protein uL14c (122 aa).

This sequence belongs to the universal ribosomal protein uL14 family. Part of the 50S ribosomal subunit.

It is found in the plastid. It localises to the chloroplast. Functionally, binds to 23S rRNA. In Nicotiana sylvestris (Wood tobacco), this protein is Large ribosomal subunit protein uL14c.